A 295-amino-acid polypeptide reads, in one-letter code: Outer surface protein B (295 aa).

Residues 1–16 form the signal peptide; the sequence is MKQYLLGFTLVFALIA. The N-palmitoyl cysteine moiety is linked to residue Cys17. The S-diacylglycerol cysteine moiety is linked to residue Cys17.

It localises to the cell outer membrane. The polypeptide is Outer surface protein B (ospB) (Borreliella burgdorferi (Lyme disease spirochete)).